The following is a 72-amino-acid chain: Beta-defensin 104A (72 aa).

Positions 1–22 (MRRLVLLLAISLLLYQDLPVRS) are cleaved as a signal peptide. Cystine bridges form between cysteine 30–cysteine 57, cysteine 37–cysteine 51, and cysteine 41–cysteine 58.

It belongs to the beta-defensin family.

The protein localises to the secreted. In terms of biological role, has antimicrobial activity. The protein is Beta-defensin 104A (DEFB104A) of Pongo pygmaeus (Bornean orangutan).